The sequence spans 99 residues: Putative protein YgeP (99 aa).

The protein is Putative protein YgeP (ygeP) of Escherichia coli (strain K12).